Here is a 218-residue protein sequence, read N- to C-terminus: Large ribosomal subunit protein uL3 (218 aa).

Residue Gln-153 is modified to N5-methylglutamine.

It belongs to the universal ribosomal protein uL3 family. Part of the 50S ribosomal subunit. Forms a cluster with proteins L14 and L19. Methylated by PrmB.

In terms of biological role, one of the primary rRNA binding proteins, it binds directly near the 3'-end of the 23S rRNA, where it nucleates assembly of the 50S subunit. This is Large ribosomal subunit protein uL3 from Alkalilimnicola ehrlichii (strain ATCC BAA-1101 / DSM 17681 / MLHE-1).